Here is a 228-residue protein sequence, read N- to C-terminus: Sodium channel regulatory subunit beta-4 (228 aa).

The signal sequence occupies residues 1 to 30; that stretch reads MSRAGNRGNTQARWLGTGLLGLFLLPMYLS. The Ig-like C2-type domain occupies 31–148; that stretch reads LEVSVGKATT…KDLNNSATIF (118 aa). Topologically, residues 31–161 are extracellular; it reads LEVSVGKATT…VDKLEKVDNT (131 aa). N-linked (GlcNAc...) asparagine glycans are attached at residues Asn-45, Asn-71, Asn-113, and Asn-142. Cys-53 and Cys-131 form a disulfide bridge. The helical transmembrane segment at 162 to 182 threads the bilayer; it reads VTLIILAVVGGVIGLLVCILL. At 183–228 the chain is on the cytoplasmic side; that stretch reads LKKLITFILKKTREKKKECLVSSSGNDNTENGLPGSKAEEKPPTKV. The interval 199–228 is disordered; it reads KECLVSSSGNDNTENGLPGSKAEEKPPTKV. Over residues 203-213 the composition is skewed to polar residues; sequence VSSSGNDNTEN. The segment covering 219-228 has biased composition (basic and acidic residues); the sequence is KAEEKPPTKV.

Belongs to the sodium channel auxiliary subunit SCN4B (TC 8.A.17) family. A voltage-gated sodium (Nav) channel consists of an ion-conducting pore-forming alpha subunit functional on its own that is regulated by one or more beta subunits. The beta subunit SCN4B is disulfide-linked to the pore-forming alpha subunit. Interacts with SCN1A; regulatory subunit of SCN1A/Nav1.1. Interacts with SCN2A; regulatory subunit of SCN2A/Nav1.2. Post-translationally, contains an interchain disulfide bond with SCN2A.

Its subcellular location is the cell membrane. Its function is as follows. Regulatory subunit of multiple voltage-gated sodium (Nav) channels directly mediating the depolarization of excitable membranes. Navs, also called VGSCs (voltage-gated sodium channels) or VDSCs (voltage-dependent sodium channels), operate by switching between closed and open conformations depending on the voltage difference across the membrane. In the open conformation they allow Na(+) ions to selectively pass through the pore, along their electrochemical gradient. The influx of Na+ ions provokes membrane depolarization, initiating the propagation of electrical signals throughout cells and tissues. The accessory beta subunits participate in localization and functional modulation of the Nav channels. Modulates the activity of SCN1A/Nav1.1. Modulates the activity of SCN2A/Nav1.2. In Mus musculus (Mouse), this protein is Sodium channel regulatory subunit beta-4.